A 415-amino-acid polypeptide reads, in one-letter code: Gamma-glutamyl phosphate reductase (415 aa).

The protein belongs to the gamma-glutamyl phosphate reductase family.

The protein resides in the cytoplasm. The enzyme catalyses L-glutamate 5-semialdehyde + phosphate + NADP(+) = L-glutamyl 5-phosphate + NADPH + H(+). Its pathway is amino-acid biosynthesis; L-proline biosynthesis; L-glutamate 5-semialdehyde from L-glutamate: step 2/2. Its function is as follows. Catalyzes the NADPH-dependent reduction of L-glutamate 5-phosphate into L-glutamate 5-semialdehyde and phosphate. The product spontaneously undergoes cyclization to form 1-pyrroline-5-carboxylate. The sequence is that of Gamma-glutamyl phosphate reductase from Carboxydothermus hydrogenoformans (strain ATCC BAA-161 / DSM 6008 / Z-2901).